Consider the following 325-residue polypeptide: Glutarate 2-hydroxylase (325 aa).

Residues His-160, Asp-162, and His-292 each contribute to the Fe cation site.

The protein belongs to the glutarate hydroxylase family. As to quaternary structure, homotetramer. The cofactor is Fe(2+).

It catalyses the reaction glutarate + 2-oxoglutarate + O2 = (S)-2-hydroxyglutarate + succinate + CO2. It participates in amino-acid degradation. Functionally, acts as an alpha-ketoglutarate-dependent dioxygenase catalyzing hydroxylation of glutarate (GA) to L-2-hydroxyglutarate (L2HG). Functions in a L-lysine degradation pathway that proceeds via cadaverine, glutarate and L-2-hydroxyglutarate. Is extremely specific for glutarate, but it can use both 2-oxoglutarate and 2-oxoadipate (2OA) as a cosubstrate for L2HG formation. The chain is Glutarate 2-hydroxylase from Pseudomonas putida (strain ATCC 47054 / DSM 6125 / CFBP 8728 / NCIMB 11950 / KT2440).